The primary structure comprises 1376 residues: DNA-directed RNA polymerase subunit beta (1376 aa).

The protein belongs to the RNA polymerase beta chain family. In terms of assembly, the RNAP catalytic core consists of 2 alpha, 1 beta, 1 beta' and 1 omega subunit. When a sigma factor is associated with the core the holoenzyme is formed, which can initiate transcription.

It carries out the reaction RNA(n) + a ribonucleoside 5'-triphosphate = RNA(n+1) + diphosphate. DNA-dependent RNA polymerase catalyzes the transcription of DNA into RNA using the four ribonucleoside triphosphates as substrates. In Methylorubrum extorquens (strain PA1) (Methylobacterium extorquens), this protein is DNA-directed RNA polymerase subunit beta.